The chain runs to 88 residues: Apolipoprotein C-I (88 aa).

An N-terminal signal peptide occupies residues 1–26 (MRLFLSLPVLVVVLAMVLEGPAPTQA).

Belongs to the apolipoprotein C1 family.

The protein localises to the secreted. Functionally, inhibitor of lipoprotein binding to the low density lipoprotein (LDL) receptor, LDL receptor-related protein, and very low density lipoprotein (VLDL) receptor. Associates with high density lipoproteins (HDL) and the triacylglycerol-rich lipoproteins in the plasma and makes up about 10% of the protein of the VLDL and 2% of that of HDL. Appears to interfere directly with fatty acid uptake and is also the major plasma inhibitor of cholesteryl ester transfer protein (CETP). Binds free fatty acids and reduces their intracellular esterification. Modulates the interaction of APOE with beta-migrating VLDL and inhibits binding of beta-VLDL to the LDL receptor-related protein. This is Apolipoprotein C-I (APOC1) from Leptonychotes weddellii (Weddell seal).